We begin with the raw amino-acid sequence, 431 residues long: O-Mevalon transferase macI (431 aa).

The N-linked (GlcNAc...) asparagine glycan is linked to Asn-176. 4 helical membrane-spanning segments follow: residues 198–218 (IYAL…AILM), 301–321 (LLMM…YQVT), 336–356 (YFAL…VLGI), and 404–424 (LFAA…NFVA).

It belongs to the wax synthase family.

It localises to the membrane. Its pathway is secondary metabolite biosynthesis; terpenoid biosynthesis. O-Mevalon transferase; part of the gene cluster that mediates the biosynthesis of macrophorins, isoprenoid epoxycyclohexenones containing cyclized drimane moieties. The first step of the pathway is the synthesis of 6-methylsalicylic acid (6-MSA) by the polyketide synthase macA. 6-MSA is then converted to m-cresol by the decarboxylase macB. The cytochrome P450 monooxygenase macC then catalyzes the oxidation of m-cresol to toluquinol. Epoxidation of toluquinol is then performed by the short chain dehydrogenase macD, with the help of macE, and a further prenylation by macG leads to 7-deacetoxyyanuthone A. The next step is the hydroxylation of C-22 of 7-deacetoxyyanuthone A by the cytochrome P450 monooxygenase macH to yield 22-deacetylyanuthone A. O-Mevalon transferase macI then attaches mevalon to the hydroxyl group of 22-deacetylyanuthone A to produce yanuthone E. The terpene cyclase macJ catalyzes the cyclization of 22-deacetylyanuthone A to macrophorin A. MacJ is also able to catalyze cyclization of yanuthone E and 7-deacetoxyyanuthone A to their corresponding macrophorins. The macJ products can be further modified by macH and macJ, as well as by the FAD-dependent monooxygenase macF, to produce additional macrophorins, including 4'-oxomacrophorin A, 4'-oxomacrophorin D and 4'-oxomacrophorin E. This chain is O-Mevalon transferase macI, found in Penicillium terrestre.